The primary structure comprises 239 residues: Ribosomal RNA small subunit methyltransferase G (239 aa).

Residues G77, F82, 128–129 (AE), and R146 each bind S-adenosyl-L-methionine. A disordered region spans residues 214-239 (IDKKRQTPKKYPRKPGTPNKTPLLEK).

This sequence belongs to the methyltransferase superfamily. RNA methyltransferase RsmG family.

It localises to the cytoplasm. In terms of biological role, specifically methylates the N7 position of guanine in position 535 of 16S rRNA. In Staphylococcus aureus (strain Mu3 / ATCC 700698), this protein is Ribosomal RNA small subunit methyltransferase G.